The sequence spans 288 residues: Thymidylate synthase (288 aa).

DUMP-binding positions include Arg-21 and 150-151 (RR). Cys-170 (nucleophile) is an active-site residue. DUMP-binding positions include 191–194 (RSGD), Asn-202, and 232–234 (HIY). Position 194 (Asp-194) interacts with (6R)-5,10-methylene-5,6,7,8-tetrahydrofolate. A (6R)-5,10-methylene-5,6,7,8-tetrahydrofolate-binding site is contributed by Ala-287.

It belongs to the thymidylate synthase family. Bacterial-type ThyA subfamily. In terms of assembly, homodimer.

The protein localises to the cytoplasm. The catalysed reaction is dUMP + (6R)-5,10-methylene-5,6,7,8-tetrahydrofolate = 7,8-dihydrofolate + dTMP. It participates in pyrimidine metabolism; dTTP biosynthesis. Its function is as follows. Catalyzes the reductive methylation of 2'-deoxyuridine-5'-monophosphate (dUMP) to 2'-deoxythymidine-5'-monophosphate (dTMP) while utilizing 5,10-methylenetetrahydrofolate (mTHF) as the methyl donor and reductant in the reaction, yielding dihydrofolate (DHF) as a by-product. This enzymatic reaction provides an intracellular de novo source of dTMP, an essential precursor for DNA biosynthesis. This chain is Thymidylate synthase, found in Mesoplasma florum (strain ATCC 33453 / NBRC 100688 / NCTC 11704 / L1) (Acholeplasma florum).